A 513-amino-acid chain; its full sequence is MEKFEGYSEKQKSRQQYFVYPLLFQEYIYAFAHDYGLNGSEPVEIFGCNNKKFSSLLVKRLIIRMYQQNFWINSVNHPNQDRLLDHSNYFYSEFYSQILSEGFAIVVEIPFSLGELSCPEEKEIPKFQNLQSIHSIFPFLEDKFLHLHYLSHLEIPYPIHLEILVQLLEYRIQDVPSLHLLRFFLNYYSNWNSLIISMKSIFLLKKENKRLFRFLYNSYVSEYEFFLLFLRKQSSCLRLTSSGTFLERIIFSRKMEHFGVMYPGFFRKTIWFFMDPLMHYVRYQGKAILASKGTLLLKKKWKSYLVNFSQYFFSFWTQPQRIRLNQLTNSCFDFLGYLSSVPINTLLVRNQMLENSFLIDTRMKKFDTTVPATPLIGSLSKAQFCTGSGHPISKPVWTDLSDWDILDRFGRICRNLFHYHSGSSKKRTLYRLKYILRLSCARTLARKHKSTVRTFMQRLGSVFLEEFFTEEEQVFSLMFTKTTHFSFHGSHSERIWYLDIIRINDLVNPLTLN.

The protein belongs to the intron maturase 2 family. MatK subfamily.

It localises to the plastid. It is found in the chloroplast. Usually encoded in the trnK tRNA gene intron. Probably assists in splicing its own and other chloroplast group II introns. The protein is Maturase K of Molinia caerulea (Purple moor-grass).